Here is a 235-residue protein sequence, read N- to C-terminus: Phosphoribosylaminoimidazole-succinocarboxamide synthase (235 aa).

Belongs to the SAICAR synthetase family.

It catalyses the reaction 5-amino-1-(5-phospho-D-ribosyl)imidazole-4-carboxylate + L-aspartate + ATP = (2S)-2-[5-amino-1-(5-phospho-beta-D-ribosyl)imidazole-4-carboxamido]succinate + ADP + phosphate + 2 H(+). Its pathway is purine metabolism; IMP biosynthesis via de novo pathway; 5-amino-1-(5-phospho-D-ribosyl)imidazole-4-carboxamide from 5-amino-1-(5-phospho-D-ribosyl)imidazole-4-carboxylate: step 1/2. This is Phosphoribosylaminoimidazole-succinocarboxamide synthase from Clostridium perfringens (strain 13 / Type A).